Consider the following 523-residue polypeptide: Putative glycerol-3-phosphate transporter 1 (523 aa).

Transmembrane regions (helical) follow at residues 29-49 (LSYS…YASY), 102-122 (VLLG…MYFA), 133-153 (IFLT…GVGY), 163-183 (FLIM…SVVA), 196-216 (LIMG…SLIA), 228-248 (FVVP…FLPV), 306-326 (FALC…WLPF), 344-364 (GNLS…AGYI), 368-388 (IGAR…ALFF), 402-422 (SLMF…TTAV), 444-464 (AIID…TGYI), and 468-488 (GSWT…GLLL).

Belongs to the major facilitator superfamily. Organophosphate:Pi antiporter (OPA) (TC 2.A.1.4) family.

The protein localises to the membrane. The sequence is that of Putative glycerol-3-phosphate transporter 1 from Arabidopsis thaliana (Mouse-ear cress).